The following is a 200-amino-acid chain: Systemin (200 aa).

The disordered stretch occupies residues 1–33 (MGTPSYDIKNKGDDMQEEPKVKLHHEKGGDEKE). Propeptides lie at residues 1 to 178 (MGTP…REDL) and 197 to 200 (NNKL). The 1; truncated repeat unit spans residues 3–8 (TPSYDI). A compositionally biased stretch (basic and acidic residues) spans 8–33 (IKNKGDDMQEEPKVKLHHEKGGDEKE). Tandem repeats lie at residues 37-45 (EKETPSQDI), 80-88 (EKETISQYI), 117-125 (EKETPSQDI), and 145-153 (DKETPSQDI). Disordered stretches follow at residues 106 to 159 (EEEE…MEGE) and 178 to 200 (LAVQ…NNKL). Composition is skewed to basic and acidic residues over residues 111-140 (EKEK…KVEH) and 146-158 (KETP…KMEG).

All organs except the roots. Transported out of wounds to distal tissues.

The protein resides in the cytoplasm. Its function is as follows. Activates a lipid-based signal transduction pathway in which linolenic acid is converted to jasmonic acid, a potent activator of defense gene transcription, including proteinase inhibitor. The protein is Systemin of Solanum lycopersicum (Tomato).